Consider the following 311-residue polypeptide: Methionyl-tRNA formyltransferase (311 aa).

110-113 (SLLP) provides a ligand contact to (6S)-5,6,7,8-tetrahydrofolate.

Belongs to the Fmt family.

The enzyme catalyses L-methionyl-tRNA(fMet) + (6R)-10-formyltetrahydrofolate = N-formyl-L-methionyl-tRNA(fMet) + (6S)-5,6,7,8-tetrahydrofolate + H(+). Its function is as follows. Attaches a formyl group to the free amino group of methionyl-tRNA(fMet). The formyl group appears to play a dual role in the initiator identity of N-formylmethionyl-tRNA by promoting its recognition by IF2 and preventing the misappropriation of this tRNA by the elongation apparatus. This chain is Methionyl-tRNA formyltransferase, found in Streptococcus equi subsp. equi (strain 4047).